Reading from the N-terminus, the 1351-residue chain is Tripartite motif-containing protein 66 (1351 aa).

The B box-type 1; atypical zinc-finger motif lies at 105–150 (MARNCSECKEKRAAHILCTYCNRWLCSSCTEEHRHSPVPGGPFFPR). Positions 109, 112, 133, 139, 169, 172, 192, and 197 each coordinate Zn(2+). Residues 164 to 205 (DFTLYCPLHTQEVLKLFCETCDMLTCHSCLVVEHKEHRCRHV) form a B box-type 2 zinc finger. The stretch at 234 to 304 (AKQIEDRIFE…IMVLNRQFEH (71 aa)) forms a coiled coil. 3 disordered regions span residues 542–608 (FGHH…CSQN), 663–730 (APVQ…VRKH), and 857–895 (CPLQ…DPSL). The segment covering 560–588 (QLPPPPPPLPHPPPPLPPPPQQPHPPLPP) has biased composition (pro residues). The span at 664-676 (PVQSQSQEETLQA) shows a compositional bias: polar residues. Residues 872-884 (TGSSSSSGRTSGS) show a composition bias toward low complexity. The PxVxL motif motif lies at 995–999 (PYVRL). The segment at 1067-1098 (TSLAGQRPPEVEGTSPEEHRLIPRTPGAKKGP) is disordered. A PHD-type zinc finger spans residues 1105–1152 (EDFCAVCLNGGELLCCDRCPKVFHLSCHVPALLSFPGGEWVCTLCRSL). The 107-residue stretch at 1176 to 1282 (GLSMYDQKKC…VFFEGWLKEI (107 aa)) folds into the Bromo domain. Residues 1289–1351 (AQPRQEDSDS…FRLANSISQV (63 aa)) form a disordered region.

As to quaternary structure, can form homodimers and heterodimers. Interacts with CBX5, CBX1 and CBX3 via PxVxL motif.

Its subcellular location is the nucleus. In terms of biological role, may function as transcription repressor; The repressive effects are mediated, at least in part, by recruitment of deacetylase activity. May play a role as negative regulator of postmeiotic genes acting through CBX3 complex formation and centromere association. In Homo sapiens (Human), this protein is Tripartite motif-containing protein 66 (TRIM66).